The sequence spans 364 residues: Spermatogenesis-associated protein 22 (364 aa).

Polar residues-rich tracts occupy residues 1–13, 30–48, 73–108, 137–169, and 177–189; these read MKRN…TRST, QPLT…NASD, KTVN…SKSD, LMTN…LPNQ, and QTKS…STMR. Disordered regions lie at residues 1 to 51 and 70 to 189; these read MKRN…DNYD and PLTK…STMR.

Component of a multiprotein complex with MEIOB and RPA2. Interacts with MEIOB. Interacts with the complex BRME1:HSF2BP:BRCA2.

The protein localises to the chromosome. Functionally, meiosis-specific protein required for homologous recombination in meiosis I. The protein is Spermatogenesis-associated protein 22 (SPATA22) of Bos taurus (Bovine).